The chain runs to 198 residues: Protein C4 (198 aa).

Positions 1–36 (MFNPRHPGGEFFGRKHHRRHAPDGRSSSSSSSSSEC) are disordered.

This Giardia intestinalis (Giardia lamblia) protein is Protein C4 (C4).